The sequence spans 217 residues: MTDRYEQINDYIEALLKPRPDNVKRLEAYAEEHHVPIMEKAGMEVLLQILSVKQPKKILEIGTAIGYSAIRMALELPSAEIYTIERNEKRHEEAVNNIKEFQLDDRIHVFYGDALELADAVHVTAPYDVIFIDAAKGQYQNFFHLYEPMLSPDGVIITDNVLFKGLVAEDYSKIEPKRRRRLVAKIDEYNHWLMNHPDYQTAIIPVGDGLAISKKKR.

S-adenosyl-L-methionine contacts are provided by residues methionine 38, serine 68, glutamate 85, 113-114 (DA), and aspartate 133. Mg(2+) contacts are provided by aspartate 133, aspartate 159, and asparagine 160.

The protein belongs to the class I-like SAM-binding methyltransferase superfamily. Cation-dependent O-methyltransferase family. In terms of assembly, homodimer.

It carries out the reaction 5-hydroxyuridine(34) in tRNA + S-adenosyl-L-methionine = 5-methoxyuridine(34) in tRNA + S-adenosyl-L-homocysteine + H(+). Catalyzes the methylation of 5-hydroxyuridine (ho5U) to form 5-methoxyuridine (mo5U) at position 34 in tRNAs. The sequence is that of tRNA 5-hydroxyuridine methyltransferase from Bacillus subtilis (strain 168).